The following is a 71-amino-acid chain: Small ribosomal subunit protein bS21 (71 aa).

Residues 48–71 are disordered; it reads ENATLAKRHAKRNARENARNTRLY. Positions 60 to 71 are enriched in basic and acidic residues; the sequence is NARENARNTRLY.

Belongs to the bacterial ribosomal protein bS21 family.

This chain is Small ribosomal subunit protein bS21, found in Haemophilus influenzae (strain 86-028NP).